Consider the following 245-residue polypeptide: Aquaporin SIP1-1 (245 aa).

2 consecutive transmembrane segments (helical) span residues 14-34 and 55-75; these read AVVT…TAAV and LLSV…GASF. The NPA 1 signature appears at 76–78; the sequence is NPT. The next 3 membrane-spanning stretches (helical) occupy residues 100–120, 138–158, and 164–184; these read FPAQ…LMPA, GALA…WVIV, and VILK…AGAE. The NPA 2 signature appears at 191-193; the sequence is NPA. A helical transmembrane segment spans residues 213–233; the sequence is VYWICPFIGAMLAGWIFRVVF.

It belongs to the MIP/aquaporin (TC 1.A.8) family. SIP (TC 1.A.8.10) subfamily.

The protein localises to the membrane. Functionally, aquaporins facilitate the transport of water and small neutral solutes across cell membranes. The chain is Aquaporin SIP1-1 (SIP1-1) from Zea mays (Maize).